The sequence spans 715 residues: Elongation factor G (715 aa).

One can recognise a tr-type G domain in the interval 8 to 290 (NRYRNIGICA…AVIDFLPAPT (283 aa)). Residues 17-24 (AHVDAGKT), 88-92 (DTPGH), and 142-145 (NKMD) contribute to the GTP site.

The protein belongs to the TRAFAC class translation factor GTPase superfamily. Classic translation factor GTPase family. EF-G/EF-2 subfamily.

The protein resides in the cytoplasm. Its function is as follows. Catalyzes the GTP-dependent ribosomal translocation step during translation elongation. During this step, the ribosome changes from the pre-translocational (PRE) to the post-translocational (POST) state as the newly formed A-site-bound peptidyl-tRNA and P-site-bound deacylated tRNA move to the P and E sites, respectively. Catalyzes the coordinated movement of the two tRNA molecules, the mRNA and conformational changes in the ribosome. This Ectopseudomonas mendocina (strain ymp) (Pseudomonas mendocina) protein is Elongation factor G.